A 1363-amino-acid polypeptide reads, in one-letter code: ABC multidrug transporter MDR2 (1363 aa).

Residues 65 to 85 (IALIVIGTIAGIGAGIPFPLL) form a helical membrane-spanning segment. Residues 69-367 (VIGTIAGIGA…MAPFMHIFAS (299 aa)) form the ABC transmembrane type-1 1 domain. N97 carries an N-linked (GlcNAc...) asparagine glycan. A run of 5 helical transmembrane segments spans residues 119–139 (VLQV…HTGC), 193–213 (KVGL…VAFL), 215–235 (VATI…MAFG), 301–321 (IQFG…FWQG), and 336–356 (VSVG…FVLS). The ABC transporter 1 domain maps to 403 to 682 (IELQDVTFNY…DGVYAGMVRL (280 aa)). 438–445 (GTSGSGKS) serves as a coordination point for ATP. N-linked (GlcNAc...) asparagine glycans are attached at residues N552 and N633. The interval 738 to 758 (YMPEEADSLPTEPENEKEKPK) is disordered. A run of 3 helical transmembrane segments spans residues 781-801 (LGLI…VIFG), 820-840 (GMLF…AVIV), and 896-916 (LTGT…AGVI). Residues 781–1052 (LGLITSIMIG…MFALVPDISK (272 aa)) enclose the ABC transmembrane type-1 2 domain. An N-linked (GlcNAc...) asparagine glycan is attached at N973. Transmembrane regions (helical) follow at residues 992–1012 (FWLS…YWWG) and 1016–1036 (ILAG…LLFS). The 240-residue stretch at 1119–1358 (VQFRNVHFRY…CESYRANVIH (240 aa)) folds into the ABC transporter 2 domain. 1154 to 1161 (GPSGSGKS) provides a ligand contact to ATP.

This sequence belongs to the ABC transporter superfamily. ABCB family. Multidrug resistance exporter (TC 3.A.1.201) subfamily.

Its subcellular location is the cell membrane. Functionally, pleiotropic ABC efflux transporter that may be involved in the modulation susceptibility to a wide range of unrelated cytotoxic compounds. The polypeptide is ABC multidrug transporter MDR2 (Trichophyton tonsurans (strain CBS 112818) (Scalp ringworm fungus)).